Consider the following 332-residue polypeptide: Sphingolipid delta(4)-desaturase DES1-like (332 aa).

3 helical membrane passes run 55–75, 83–103, and 119–139; these read PWAF…AAIL, ILSI…LAIH, and CLGI…FQKY. The Histidine box-1 signature appears at 103-107; that stretch reads HELSH. A Histidine box-2 motif is present at residues 140-144; it reads HLEHH. 3 helical membrane passes run 164–184, 197–217, and 222–242; these read LVTN…FYAL, WEFI…LFFG, and AYLI…GHFI. A Histidine box-3 motif is present at residues 271–275; the sequence is HNEHH.

Belongs to the fatty acid desaturase type 1 family. DEGS subfamily. Specifically expressed in flowers.

Its subcellular location is the endoplasmic reticulum membrane. The enzyme catalyses an N-acylsphinganine + 2 Fe(II)-[cytochrome b5] + O2 + 2 H(+) = an N-acylsphing-4-enine + 2 Fe(III)-[cytochrome b5] + 2 H2O. In terms of biological role, sphingolipid-delta-4-desaturase required for the biosynthesis of delta-4-unsaturated sphingolipids and derivatives. May be required for the biosynthesis of glucosylceramides. This chain is Sphingolipid delta(4)-desaturase DES1-like, found in Arabidopsis thaliana (Mouse-ear cress).